A 247-amino-acid chain; its full sequence is uncharacterized protein (247 aa).

The NAD(+) site is built by Leu19, Asp38, Asp63, and Val64. Residue Ser142 coordinates substrate. Tyr155, Lys159, and Ser190 together coordinate NAD(+). Tyr155 functions as the Proton acceptor in the catalytic mechanism.

It belongs to the short-chain dehydrogenases/reductases (SDR) family.

This is an uncharacterized protein from Mycobacterium bovis (strain ATCC BAA-935 / AF2122/97).